We begin with the raw amino-acid sequence, 317 residues long: Protoheme IX farnesyltransferase (317 aa).

Helical transmembrane passes span 33–53, 54–74, 117–137, 154–174, 181–201, 242–262, and 285–305; these read VMSL…GEIN, PILG…SGAL, VILG…TIFF, IVIG…CVTG, VILF…LALF, FFTG…SAIF, and MFAY…ADHF.

This sequence belongs to the UbiA prenyltransferase family. Protoheme IX farnesyltransferase subfamily.

It is found in the cell inner membrane. The catalysed reaction is heme b + (2E,6E)-farnesyl diphosphate + H2O = Fe(II)-heme o + diphosphate. Its pathway is porphyrin-containing compound metabolism; heme O biosynthesis; heme O from protoheme: step 1/1. Functionally, converts heme B (protoheme IX) to heme O by substitution of the vinyl group on carbon 2 of heme B porphyrin ring with a hydroxyethyl farnesyl side group. The protein is Protoheme IX farnesyltransferase of Agrobacterium fabrum (strain C58 / ATCC 33970) (Agrobacterium tumefaciens (strain C58)).